A 241-amino-acid chain; its full sequence is NEP1-interacting protein 2 (241 aa).

The disordered stretch occupies residues 1–20; it reads MASSSSSSYRFQSGSYPLSS. The Lumenal, thylakoid segment spans residues 1 to 36; that stretch reads MASSSSSSYRFQSGSYPLSSSPSLGNFVERIKDACH. A helical transmembrane segment spans residues 37-57; it reads FLVSAVLGTIISAILTFFFAL. At 58 to 76 the chain is on the stromal side; the sequence is VGTLLGALTGALIGQETES. A helical membrane pass occupies residues 77-97; the sequence is GFIRGAAIGAISGAVFSIEVF. Topologically, residues 98-109 are lumenal, thylakoid; that stretch reads ESSLDLWKSDES. Residues 110 to 130 traverse the membrane as a helical segment; the sequence is GFGCFLYLIDVIVSLLSGRLV. The Stromal portion of the chain corresponds to 131–241; the sequence is RERIGPAMLS…GSCPMCRRDI (111 aa). The RING-type; atypical zinc finger occupies 196 to 238; it reads CSVCLQDFQLGETVRSLPHCHHMFHLPCIDNWLLRHGSCPMCR.

The protein belongs to the RING-type zinc finger family. NIP subfamily. In terms of assembly, interacts with RPOT2.

The protein localises to the plastid. Its subcellular location is the chloroplast thylakoid membrane. Intrinsic thylakoid membrane protein that fixes RPOT2 on the stromal side of the thylakoid membrane. The polypeptide is NEP1-interacting protein 2 (NIP2) (Arabidopsis thaliana (Mouse-ear cress)).